The following is a 210-amino-acid chain: MSGLFITLEGPEGAGKSTNRDYLAARLREHGLDVVLTREPGGTPLAERVRELLLAPSDESMAADTELLLVFAARAQHLAQVIRPALARGAVVLCDRFTDATYAYQGGGRGLSVERIATLEQFVQGGLRPDLTLVFDLPVEVGLARAAARGRLDRFEQEGQAFFEAVRQAYLQRAQRAPQRYSLLDAAQSLEAVQRDIDALLPGIVERCRG.

Position 10–17 (10–17 (GPEGAGKS)) interacts with ATP.

The protein belongs to the thymidylate kinase family.

The enzyme catalyses dTMP + ATP = dTDP + ADP. Functionally, phosphorylation of dTMP to form dTDP in both de novo and salvage pathways of dTTP synthesis. The protein is Thymidylate kinase of Pseudomonas putida (strain GB-1).